A 118-amino-acid polypeptide reads, in one-letter code: T cell receptor gamma variable 4 (118 aa).

A signal peptide spans 1 to 17; that stretch reads MQWALAVLLAFLSPASQ. One can recognise an Ig-like domain in the interval 18–118; the sequence is KSSNLEGRTK…GVYYCATWDG (101 aa). The cysteines at positions 41 and 113 are disulfide-linked. N-linked (GlcNAc...) asparagine glycosylation is present at N106.

As to quaternary structure, gamma-delta TR is a heterodimer composed of a gamma and delta chain; disulfide-linked. The gamma-delta TR is associated with the transmembrane signaling CD3 coreceptor proteins following the stoichiometry: a single gamma-delta TR heterodimer associates with one CD3D-CD3E heterodimer, one CD3G-CD3E heterodimer and one CD247 homodimer forming a stable octameric structure. Upon activation, gamma-delta TR complex associates with FCER1G to initiate intracellular signaling.

Its subcellular location is the cell membrane. In terms of biological role, v region of the variable domain of T cell receptor (TR) gamma chain that participates in the antigen recognition. Gamma-delta TRs recognize a variety of self and foreign non-peptide antigens frequently expressed at the epithelial boundaries between the host and external environment, including endogenous lipids presented by MH-like protein CD1D and phosphoantigens presented by butyrophilin-like molecule BTN3A1. Upon antigen recognition induces rapid, innate-like immune responses involved in pathogen clearance and tissue repair. Binding of gamma-delta TR complex to antigen triggers phosphorylation of immunoreceptor tyrosine-based activation motifs (ITAMs) in the CD3 chains by the LCK and FYN kinases, allowing the recruitment, phosphorylation, and activation of ZAP70 that facilitates phosphorylation of the scaffolding proteins LCP2 and LAT. This lead to the formation of a supramolecular signalosome that recruits the phospholipase PLCG1, resulting in calcium mobilization and ERK activation, ultimately leading to T cell expansion and differentiation into effector cells. Gamma-delta TRs are produced through somatic rearrangement of a limited repertoire of variable (V), diversity (D), and joining (J) genes. The potential diversity of gamma-delta TRs is conferred by the unique ability to rearrange (D) genes in tandem and to utilize all three reading frames. The combinatorial diversity is considerably increased by the sequence exonuclease trimming and random nucleotide (N) region additions which occur during the V-(D)-J rearrangements. This Homo sapiens (Human) protein is T cell receptor gamma variable 4.